Reading from the N-terminus, the 238-residue chain is Ribonuclease PH (238 aa).

Phosphate is bound by residues R86 and G124–R126.

It belongs to the RNase PH family. In terms of assembly, homohexameric ring arranged as a trimer of dimers.

It catalyses the reaction tRNA(n+1) + phosphate = tRNA(n) + a ribonucleoside 5'-diphosphate. Phosphorolytic 3'-5' exoribonuclease that plays an important role in tRNA 3'-end maturation. Removes nucleotide residues following the 3'-CCA terminus of tRNAs; can also add nucleotides to the ends of RNA molecules by using nucleoside diphosphates as substrates, but this may not be physiologically important. Probably plays a role in initiation of 16S rRNA degradation (leading to ribosome degradation) during starvation. The sequence is that of Ribonuclease PH from Chelativorans sp. (strain BNC1).